The primary structure comprises 393 residues: N-acyl-phosphatidylethanolamine-hydrolyzing phospholipase D (393 aa).

Residue methionine 1 is modified to N-acetylmethionine. A compositionally biased stretch (polar residues) spans 1–16 (MDENESNQSLMTSSQY). The disordered stretch occupies residues 1–40 (MDENESNQSLMTSSQYPKEAVRKRQNSARNSGASDSSRFS). Residues histidine 185 and histidine 187 each coordinate Zn(2+). Position 188 (tyrosine 188) interacts with an N-acyl-1,2-diacyl-sn-glycero-3-phosphoethanolamine. Residues aspartate 189, histidine 190, and histidine 253 each contribute to the Zn(2+) site. Residues lysine 256 and methionine 260 each coordinate deoxycholate. Aspartate 284 lines the Zn(2+) pocket. An N-acyl-1,2-diacyl-sn-glycero-3-phosphoethanolamine is bound at residue histidine 321. Histidine 343 is a Zn(2+) binding site. Deoxycholate is bound at residue alanine 348.

This sequence belongs to the NAPE-PLD family. In terms of assembly, homodimer. Bile acids promote the assembly of inactive monomers into an active dimer and enable catalysis. It depends on Zn(2+) as a cofactor. As to expression, widely expressed. Highest expression in brain, kidney and testis (at protein level). Expressed in adipose tissue (at protein level).

It is found in the golgi apparatus membrane. The protein localises to the early endosome membrane. Its subcellular location is the nucleus envelope. It localises to the nucleus. The protein resides in the nucleoplasm. It catalyses the reaction an N-acyl-1,2-diacyl-sn-glycero-3-phosphoethanolamine + H2O = an N-acylethanolamine + a 1,2-diacyl-sn-glycero-3-phosphate + H(+). The enzyme catalyses N-butanoyl-1-hexadecanoyl-2-(9Z,12Z-octadecadienoyl)-sn-glycero-3-phosphoethanolamine + H2O = N-butanoyl ethanolamine + 1-hexadecanoyl-2-(9Z,12Z-octadecadienoyl)-sn-glycero-3-phosphate + H(+). It carries out the reaction N-hexanoyl-1-hexadecanoyl-2-(9Z,12Z-octadecadienoyl)-sn-glycero-3-phosphoethanolamine + H2O = N-hexanoyl ethanolamine + 1-hexadecanoyl-2-(9Z,12Z-octadecadienoyl)-sn-glycero-3-phosphate + H(+). The catalysed reaction is N-octanoyl-1-hexadecanoyl-2-(9Z,12Z-octadecadienoyl)-sn-glycero-3-phosphoethanolamine + H2O = N-octanoyl ethanolamine + 1-hexadecanoyl-2-(9Z,12Z-octadecadienoyl)-sn-glycero-3-phosphate + H(+). It catalyses the reaction N-decanoyl-1-hexadecanoyl-2-(9Z,12Z-octadecadienoyl)-sn-glycero-3-phosphoethanolamine + H2O = N-decanoyl ethanolamine + 1-hexadecanoyl-2-(9Z,12Z-octadecadienoyl)-sn-glycero-3-phosphate + H(+). The enzyme catalyses N-dodecanoyl-1,2-di-(9Z-octadecenoyl)-sn-glycero-3-phosphoethanolamine + H2O = N-dodecanoylethanolamine + 1,2-di-(9Z-octadecenoyl)-sn-glycero-3-phosphate + H(+). It carries out the reaction N-tetradecanoyl-1,2-di-(9Z-octadecenoyl)-sn-glycero-3-phosphoethanolamine + H2O = N-tetradecanoylethanolamine + 1,2-di-(9Z-octadecenoyl)-sn-glycero-3-phosphate + H(+). The catalysed reaction is N-hexadecanoyl-1,2-di-(9Z-octadecenoyl)-sn-glycero-3-phosphoethanolamine + H2O = N-hexadecanoylethanolamine + 1,2-di-(9Z-octadecenoyl)-sn-glycero-3-phosphate + H(+). It catalyses the reaction N,1-dihexadecanoyl-2-(9Z,12Z-octadecadienoyl)-sn-glycero-3-phosphoethanolamine + H2O = 1-hexadecanoyl-2-(9Z,12Z-octadecadienoyl)-sn-glycero-3-phosphate + N-hexadecanoylethanolamine + H(+). The enzyme catalyses N-octadecanoyl-1,2-di-(9Z-octadecenoyl)-sn-glycero-3-phosphoethanolamine + H2O = N-octadecanoyl ethanolamine + 1,2-di-(9Z-octadecenoyl)-sn-glycero-3-phosphate + H(+). It carries out the reaction N,1,2-tri-(9Z-octadecenoyl)-sn-glycero-3-phosphoethanolamine + H2O = N-(9Z-octadecenoyl) ethanolamine + 1,2-di-(9Z-octadecenoyl)-sn-glycero-3-phosphate + H(+). The catalysed reaction is N-(5Z,8Z,11Z,14Z-eicosatetraenoyl)-1,2-diacyl-sn-glycero-3-phosphoethanolamine + H2O = N-(5Z,8Z,11Z,14Z-eicosatetraenoyl)-ethanolamine + a 1,2-diacyl-sn-glycero-3-phosphate + H(+). It catalyses the reaction N-(5Z,8Z,11Z,14Z-eicosatetraenoyl)-1,2-di-(9Z-octadecenoyl)-sn-glycero-3-phosphoethanolamine + H2O = N-(5Z,8Z,11Z,14Z-eicosatetraenoyl)-ethanolamine + 1,2-di-(9Z-octadecenoyl)-sn-glycero-3-phosphate + H(+). The enzyme catalyses 1-O-(1Z-octadecenoyl)-2-(9Z-octadecenoyl)-sn-glycero-3-phospho-N-hexadecanoyl-ethanolamine + H2O = 1-O-(1Z-octadecenoyl)-2-(9Z-octadecenoyl)-sn-glycero-3-phosphate + N-hexadecanoylethanolamine + H(+). It carries out the reaction N,1-diacyl-sn-glycero-3-phosphoethanolamine + H2O = an N-acylethanolamine + a 1-acyl-sn-glycero-3-phosphate + H(+). The catalysed reaction is N,1-dihexadecanoyl-sn-glycero-3-phosphoethanolamine + H2O = N-hexadecanoylethanolamine + 1-hexadecanoyl-sn-glycero-3-phosphate + H(+). It catalyses the reaction N-(5Z,8Z,11Z,14Z-eicosatetraenoyl)-1-(9Z-octadecenoyl)-sn-glycero-3-phosphoethanolamine + H2O = N-(5Z,8Z,11Z,14Z-eicosatetraenoyl)-ethanolamine + 1-(9Z-octadecenoyl)-sn-glycero-3-phosphate + H(+). With respect to regulation, activated by divalent cations. Activated by bile acids and their conjugates, except for lithocholic acid which is rather inhibitory. Binding of deoxycholic acid favors the selective release of anandamide and likely other unsatured long FAEs. Inhibited by phosphatidylethanolamines. D-type phospholipase that hydrolyzes N-acyl-phosphatidylethanolamines (NAPEs) to produce bioactive N-acylethanolamines/fatty acid ethanolamides (NAEs/FAEs) and phosphatidic acid. Cleaves the terminal phosphodiester bond of diacyl- and alkenylacyl-NAPEs, primarily playing a role in the generation of long-chain saturated and monounsaturated NAEs in the brain. May control NAPE homeostasis in dopaminergic neuron membranes and regulate neuron survival, partly through RAC1 activation. As a regulator of lipid metabolism in the adipose tissue, mediates the crosstalk between adipocytes, gut microbiota and immune cells to control body temperature and weight. In particular, regulates energy homeostasis by promoting cold-induced brown or beige adipocyte differentiation program to generate heat from fatty acids and glucose. Has limited D-type phospholipase activity toward N-acyl lyso-NAPEs. The protein is N-acyl-phosphatidylethanolamine-hydrolyzing phospholipase D (NAPEPLD) of Homo sapiens (Human).